A 151-amino-acid chain; its full sequence is MARINYSINGDPETTSKAMGSELHISPKKSREVCCKIKGMKASEARKFLEDVIAMKQAVPFKKHHDGSGHRKGPMAAGKYPISASKEILKVLKNAESNAEYKGLEPANMYIIHAAIQRGRVIHGFMPRARGRATPKDTETVNIEMILSEVR.

Residues 1–18 (MARINYSINGDPETTSKA) show a composition bias toward polar residues. The tract at residues 1–23 (MARINYSINGDPETTSKAMGSEL) is disordered.

Belongs to the universal ribosomal protein uL22 family. In terms of assembly, part of the 50S ribosomal subunit.

Functionally, this protein binds specifically to 23S rRNA. It makes multiple contacts with different domains of the 23S rRNA in the assembled 50S subunit and ribosome. In terms of biological role, the globular domain of the protein is located near the polypeptide exit tunnel on the outside of the subunit, while an extended beta-hairpin is found that lines the wall of the exit tunnel in the center of the 70S ribosome. This chain is Large ribosomal subunit protein uL22, found in Methanosarcina acetivorans (strain ATCC 35395 / DSM 2834 / JCM 12185 / C2A).